Reading from the N-terminus, the 85-residue chain is Alpha-toxin Ac2 (85 aa).

The N-terminal stretch at 1–19 (MNYLVMISLALLFMTGVES) is a signal peptide. An LCN-type CS-alpha/beta domain is found at 21 to 83 (KDGYIVDDRN…VRTKGPGRCK (63 aa)). 4 disulfides stabilise this stretch: cysteine 31-cysteine 82, cysteine 35-cysteine 55, cysteine 41-cysteine 65, and cysteine 45-cysteine 67. Lysine amide is present on lysine 83.

Belongs to the long (4 C-C) scorpion toxin superfamily. Sodium channel inhibitor family. Alpha subfamily. Expressed by the venom gland.

It is found in the secreted. Functionally, alpha toxins bind voltage-independently at site-3 of sodium channels (Nav) and inhibit the inactivation of the activated channels, thereby blocking neuronal transmission. The polypeptide is Alpha-toxin Ac2 (Androctonus crassicauda (Arabian fat-tailed scorpion)).